The chain runs to 225 residues: Small ribosomal subunit protein uS3 (225 aa).

One can recognise a KH type-2 domain in the interval 38-106 (LRAFLRRKLS…DVALNIVEIR (69 aa)).

The protein belongs to the universal ribosomal protein uS3 family. As to quaternary structure, part of the 30S ribosomal subunit. Forms a tight complex with proteins S10 and S14.

Functionally, binds the lower part of the 30S subunit head. Binds mRNA in the 70S ribosome, positioning it for translation. The protein is Small ribosomal subunit protein uS3 of Gluconobacter oxydans (strain 621H) (Gluconobacter suboxydans).